We begin with the raw amino-acid sequence, 574 residues long: R-linalool synthase, chloroplastic (574 aa).

A chloroplast-targeting transit peptide spans 1–40; that stretch reads MSCARITVTLPYRSAKTSIQRGITHCPALLRPRFSACTPL. Positions 52 to 61 are enriched in polar residues; sequence INGDNSPLKN. The tract at residues 52 to 71 is disordered; that stretch reads INGDNSPLKNTHQHVEERSS. Positions 287, 324, 328, 467, and 470 each coordinate (2E)-geranyl diphosphate. Residues D324 and D328 each coordinate Mg(2+). The short motif at 324–328 is the DDXXD motif element; it reads DDIFD. Mg(2+) contacts are provided by D470, T474, and E478.

It belongs to the terpene synthase family. Tpsb subfamily. It depends on Mg(2+) as a cofactor. Mn(2+) serves as cofactor.

It is found in the plastid. The protein localises to the chloroplast. It catalyses the reaction (2E)-geranyl diphosphate + H2O = (R)-linalool + diphosphate. It functions in the pathway secondary metabolite biosynthesis; terpenoid biosynthesis. Monoterpene synthase that catalyzes the formation of (3R)-linalool from geranyl diphosphate. This is R-linalool synthase, chloroplastic (LIS) from Ocimum basilicum (Sweet basil).